The sequence spans 172 residues: Adenine phosphoribosyltransferase (172 aa).

This sequence belongs to the purine/pyrimidine phosphoribosyltransferase family. In terms of assembly, homodimer.

The protein resides in the cytoplasm. It carries out the reaction AMP + diphosphate = 5-phospho-alpha-D-ribose 1-diphosphate + adenine. It participates in purine metabolism; AMP biosynthesis via salvage pathway; AMP from adenine: step 1/1. Catalyzes a salvage reaction resulting in the formation of AMP, that is energically less costly than de novo synthesis. This chain is Adenine phosphoribosyltransferase, found in Clostridium tetani (strain Massachusetts / E88).